Reading from the N-terminus, the 401-residue chain is MASNMLSIANPSLRVYNKGFSEFSGLHTSSLPFGRKGSDDLMAFVSFQTNAVGGKRSSQNGVVEAKLKVAINGFGRIGRNFLRCWHGRKDSPLDVVVINDTGGVKQASHLLKYDSILGTFDADVKTAGDSAISVDGKVIKVVSDRNPVNLPWGDMGIDLVIEGTGVFVDRDGAGKHLQAGAKKVLITAPGKGDIPTYVVGVNEEGYTHADTIISNASCTTNCLAPFVKVLDQKFGIIKGTMTTTHSYTGDQRLLDASHRDLRRARAACLNIVPTSTGAAKAVALVLPNLKGKLNGIALRVPTPNVSVVDLVVQVSKKTFAEEVNAAFRESADNELKGILSVCDEPLVSIDFRCTDVSSTIDSSLTMVMGDDMVKVIAWYDNEWGYSQRVVDLADIVANKWQ.

Residues 1–65 constitute a chloroplast transit peptide; the sequence is MASNMLSIAN…RSSQNGVVEA (65 aa). NADP(+)-binding positions include 76 to 77, aspartate 100, and arginine 145; that span reads RI. D-glyceraldehyde 3-phosphate-binding positions include 217–219, threonine 248, arginine 263, 276–277, and arginine 299; these read SCT and TG. Residue cysteine 218 is the Nucleophile of the active site. Asparagine 381 contacts NADP(+).

It belongs to the glyceraldehyde-3-phosphate dehydrogenase family. Tetramer of either four A chains (GAPDH 2) or two A and two B chains (GAPDH 1).

It localises to the plastid. The protein resides in the chloroplast. It carries out the reaction D-glyceraldehyde 3-phosphate + phosphate + NADP(+) = (2R)-3-phospho-glyceroyl phosphate + NADPH + H(+). Its pathway is carbohydrate biosynthesis; Calvin cycle. In Spinacia oleracea (Spinach), this protein is Glyceraldehyde-3-phosphate dehydrogenase A, chloroplastic (GAPA).